The sequence spans 537 residues: uncharacterized protein (537 aa).

4 disordered regions span residues 1-33 (MEPG…ILAF), 71-98 (SSPP…RKRQ), 197-220 (SHNN…SEEK), and 516-537 (GRQR…EEQN). Residue serine 72 is modified to Phosphoserine. Positions 88 to 98 (SRVDSEARKRQ) are enriched in basic and acidic residues. A compositionally biased stretch (polar residues) spans 197 to 214 (SHNNMASSNTQSNTQLSE). The span at 516–529 (GRQRSSRYKSHVHK) shows a compositional bias: basic residues.

This sequence belongs to the NAD kinase family.

This is an uncharacterized protein from Schizosaccharomyces pombe (strain 972 / ATCC 24843) (Fission yeast).